An 83-amino-acid chain; its full sequence is Tetracenomycin polyketide synthase acyl carrier protein (83 aa).

One can recognise a Carrier domain in the interval 3–83 (QIGLPRLVEI…VNTETAGEVA (81 aa)). Ser-41 bears the O-(pantetheine 4'-phosphoryl)serine mark.

As to quaternary structure, the tetracenomycin polyketide synthase (TCM PKS) is composed of a ketosynthase complex (TcmKL), an acyl carrier protein (TcmM), a cyclase (TcmN) and a probable second cyclase (TcmJ). Pantetheine 4'-phosphate is required as a cofactor. 4'-phosphopantetheine is transferred from CoA to a specific serine of apo-ACP.

It catalyses the reaction 10 malonyl-CoA + 8 H(+) = tetracenomycin F2 + 10 CO2 + 10 CoA + 2 H2O. Its pathway is antibiotic biosynthesis; tetracenomycin C biosynthesis. In terms of biological role, involved in the biosynthesis of tetracenomycin C (TCM C). Part of a type II polyketide synthase (PKS) that catalyzes the synthesis of tetracenomycin F2 (TCM F2), a precursor of TCM C, from malonyl-CoA. TcmM is an acyl carrier protein that serves as an acceptor of malonate from malonyl-CoA and acts as the tether for the substrates and intermediates of polyketide assembly. The malonyl CoA-acyl carrier protein transacylase FabD (MCT) is required to catalyze the transacylation between malonyl-CoA and TcmM, although a relatively slow spontaneous self-malonylation of TcmM also occurs in a reaction without the MCT. The polypeptide is Tetracenomycin polyketide synthase acyl carrier protein (Streptomyces glaucescens).